Reading from the N-terminus, the 314-residue chain is UDP-3-O-acyl-N-acetylglucosamine deacetylase (314 aa).

3 residues coordinate Zn(2+): His82, His239, and Asp243. His266 serves as the catalytic Proton donor.

It belongs to the LpxC family. Requires Zn(2+) as cofactor.

It catalyses the reaction a UDP-3-O-[(3R)-3-hydroxyacyl]-N-acetyl-alpha-D-glucosamine + H2O = a UDP-3-O-[(3R)-3-hydroxyacyl]-alpha-D-glucosamine + acetate. It functions in the pathway glycolipid biosynthesis; lipid IV(A) biosynthesis; lipid IV(A) from (3R)-3-hydroxytetradecanoyl-[acyl-carrier-protein] and UDP-N-acetyl-alpha-D-glucosamine: step 2/6. Its function is as follows. Catalyzes the hydrolysis of UDP-3-O-myristoyl-N-acetylglucosamine to form UDP-3-O-myristoylglucosamine and acetate, the committed step in lipid A biosynthesis. This Myxococcus xanthus (strain DK1622) protein is UDP-3-O-acyl-N-acetylglucosamine deacetylase.